Consider the following 398-residue polypeptide: Fatty-acid-binding protein 2 (398 aa).

3 residues coordinate dodecanoate: Arg-222, Tyr-235, and Ser-302.

It belongs to the chalcone isomerase family. As to expression, expressed in developing cotyledons, young seedlings, roots, seeds, embryos, macrospores, preanthesis and tapetum. Restricted to developing and reproductive tissues.

It localises to the plastid. It is found in the chloroplast stroma. Fatty-acid-binding protein. Associates with saturated fatty acid. The chain is Fatty-acid-binding protein 2 (FAP2) from Arabidopsis thaliana (Mouse-ear cress).